Here is a 148-residue protein sequence, read N- to C-terminus: Nickel and cobalt resistance protein CnrR (148 aa).

Positions 1-26 are cleaved as a signal peptide; the sequence is MMKSRTRRLSLSTLFGALLGVSVAAA. Residues 28–148 are Periplasmic-facing; it reads LYYSHRNEAG…LIDALRRGSQ (121 aa). The stretch at 54–117 forms a coiled coil; it reads NEREILELKE…AAGDLQRATL (64 aa).

It to A.xylosoxydans NccX.

It is found in the periplasm. Functionally, cnrH alone is able to activate cnr expression, while both CnrY and CrnR (CnrX) are needed for nickel induction of CnrH. Has been suggested to bind nickel. This is Nickel and cobalt resistance protein CnrR (cnrR) from Cupriavidus metallidurans (strain ATCC 43123 / DSM 2839 / NBRC 102507 / CH34) (Ralstonia metallidurans).